The chain runs to 358 residues: DnaJ homolog subfamily B member 11 (358 aa).

An N-terminal signal peptide occupies residues 1-22; that stretch reads MAPQNLGTLCLLLLYLLGAAIA. One can recognise a J domain in the interval 25-90; sequence DFYKILGVPR…EKRKQYDTYG (66 aa). At threonine 188 the chain carries Phosphothreonine. An N-linked (GlcNAc...) asparagine glycan is attached at asparagine 261.

As to quaternary structure, part of a large chaperone multiprotein complex comprising DNAJB11, HSP90B1, HSPA5, HYOU, PDIA2, PDIA4, PDIA6, PPIB, SDF2L1, UGGT1 and very small amounts of ERP29, but not, or at very low levels, CALR nor CANX. Binds to denatured substrates in an ATP-independent manner. Interacts via the J domain with HSPA5 in an ATP-dependent manner. Post-translationally, contains high-mannose Endo H-sensitive carbohydrates. In terms of processing, cys-169, Cys-171, Cys-193 and Cys-196 form intramolecular disulfide bonds. The preferential partner for each Cys is not known. Pancreas.

Its subcellular location is the endoplasmic reticulum lumen. As a co-chaperone for HSPA5 it is required for proper folding, trafficking or degradation of proteins. Binds directly to both unfolded proteins that are substrates for ERAD and nascent unfolded peptide chains, but dissociates from the HSPA5-unfolded protein complex before folding is completed. May help recruiting HSPA5 and other chaperones to the substrate. Stimulates HSPA5 ATPase activity. It is necessary for maturation and correct trafficking of PKD1. The sequence is that of DnaJ homolog subfamily B member 11 (DNAJB11) from Canis lupus familiaris (Dog).